A 292-amino-acid chain; its full sequence is Sulfofructosephosphate aldolase (292 aa).

Lysine 193 acts as the Schiff-base intermediate with substrate in catalysis.

This sequence belongs to the aldolase LacD family. As to quaternary structure, homotetramer.

The enzyme catalyses 6-deoxy-6-sulfo-D-fructose 1-phosphate = (2S)-3-sulfolactaldehyde + dihydroxyacetone phosphate. Its function is as follows. Cleaves 6-deoxy-6-sulfo-D-fructose 1-phosphate (SFP) to form dihydroxyacetone phosphate (DHAP) and 3-sulfolactaldehyde (SLA). This chain is Sulfofructosephosphate aldolase (yihT), found in Escherichia coli O157:H7.